A 305-amino-acid polypeptide reads, in one-letter code: Tyrosine recombinase XerC (305 aa).

One can recognise a Core-binding (CB) domain in the interval 2 to 88; it reads NQLELYIDTF…TLRSFYRFLE (87 aa). The 186-residue stretch at 109-294 folds into the Tyr recombinase domain; that stretch reads PVPGFLYQEE…TKDHLREAYM (186 aa). Active-site residues include Arg149, Lys173, His246, Arg249, and His272. Tyr281 (O-(3'-phospho-DNA)-tyrosine intermediate) is an active-site residue.

It belongs to the 'phage' integrase family. XerC subfamily. Forms a cyclic heterotetrameric complex composed of two molecules of XerC and two molecules of XerD.

The protein resides in the cytoplasm. In terms of biological role, site-specific tyrosine recombinase, which acts by catalyzing the cutting and rejoining of the recombining DNA molecules. The XerC-XerD complex is essential to convert dimers of the bacterial chromosome into monomers to permit their segregation at cell division. It also contributes to the segregational stability of plasmids. This is Tyrosine recombinase XerC from Oceanobacillus iheyensis (strain DSM 14371 / CIP 107618 / JCM 11309 / KCTC 3954 / HTE831).